Consider the following 305-residue polypeptide: tRNA uridine(34) hydroxylase (305 aa).

In terms of domain architecture, Rhodanese spans 125–219 (ADENTVVVDT…YLEEVPREQS (95 aa)). C179 serves as the catalytic Cysteine persulfide intermediate.

The protein belongs to the TrhO family.

The enzyme catalyses uridine(34) in tRNA + AH2 + O2 = 5-hydroxyuridine(34) in tRNA + A + H2O. Functionally, catalyzes oxygen-dependent 5-hydroxyuridine (ho5U) modification at position 34 in tRNAs. The sequence is that of tRNA uridine(34) hydroxylase from Brucella suis (strain ATCC 23445 / NCTC 10510).